We begin with the raw amino-acid sequence, 667 residues long: DNA ligase (667 aa).

NAD(+) contacts are provided by residues 32–36 (DSEYD), 81–82 (SL), and Glu110. Residue Lys112 is the N6-AMP-lysine intermediate of the active site. NAD(+)-binding residues include Arg133, Glu167, Lys283, and Lys307. Positions 401, 404, 419, and 424 each coordinate Zn(2+). Residues 586 to 667 (EGHPEFSGKT…FVDKQNELNS (82 aa)) form the BRCT domain.

This sequence belongs to the NAD-dependent DNA ligase family. LigA subfamily. It depends on Mg(2+) as a cofactor. Requires Mn(2+) as cofactor.

It catalyses the reaction NAD(+) + (deoxyribonucleotide)n-3'-hydroxyl + 5'-phospho-(deoxyribonucleotide)m = (deoxyribonucleotide)n+m + AMP + beta-nicotinamide D-nucleotide.. DNA ligase that catalyzes the formation of phosphodiester linkages between 5'-phosphoryl and 3'-hydroxyl groups in double-stranded DNA using NAD as a coenzyme and as the energy source for the reaction. It is essential for DNA replication and repair of damaged DNA. The sequence is that of DNA ligase from Staphylococcus aureus (strain MRSA252).